The following is a 59-amino-acid chain: UPF0391 membrane protein LPC_1949 (59 aa).

Helical transmembrane passes span alanine 5–valine 25 and isoleucine 30–leucine 50.

The protein belongs to the UPF0391 family.

It localises to the cell membrane. This Legionella pneumophila (strain Corby) protein is UPF0391 membrane protein LPC_1949.